An 845-amino-acid polypeptide reads, in one-letter code: Translation initiation factor IF-2 (845 aa).

A disordered region spans residues 1–260; sequence MSDEQDKPTL…HMTSSGPREK (260 aa). Positions 68–81 are enriched in pro residues; that stretch reads APAPAPAAPRPAAP. The span at 101–140 shows a compositional bias: basic and acidic residues; sequence REAEEARMAALEENRRREEAERARAAEEERARAEKREEQA. 2 stretches are compositionally biased toward low complexity: residues 141–166 and 173–191; these read ATKA…APPA and TAAR…RFTP. Basic and acidic residues predominate over residues 194 to 215; sequence ALKRPEPKRPEPKASRGGENRR. One can recognise a tr-type G domain in the interval 344-514; that stretch reads PRAPVVTIMG…ALQAEIMELK (171 aa). Residues 353–360 form a G1 region; that stretch reads GHVDHGKT. 353–360 is a binding site for GTP; that stretch reads GHVDHGKT. The interval 378-382 is G2; it reads GITQH. The interval 400–403 is G3; sequence DTPG. GTP contacts are provided by residues 400–404 and 454–457; these read DTPGH and NKVD. A G4 region spans residues 454-457; sequence NKVD. A G5 region spans residues 490 to 492; it reads SAL.

This sequence belongs to the TRAFAC class translation factor GTPase superfamily. Classic translation factor GTPase family. IF-2 subfamily.

The protein localises to the cytoplasm. Its function is as follows. One of the essential components for the initiation of protein synthesis. Protects formylmethionyl-tRNA from spontaneous hydrolysis and promotes its binding to the 30S ribosomal subunits. Also involved in the hydrolysis of GTP during the formation of the 70S ribosomal complex. This chain is Translation initiation factor IF-2, found in Sphingopyxis alaskensis (strain DSM 13593 / LMG 18877 / RB2256) (Sphingomonas alaskensis).